The chain runs to 299 residues: Very long chain fatty acid elongase 5 (299 aa).

Position 1 is an N-acetylmethionine (M1). A run of 7 helical transmembrane segments spans residues 26-46 (WFLL…LLIV), 64-84 (ILQL…YELV), 112-132 (VLWW…FFIL), 139-158 (ITVL…WFVM), 168-187 (FGAT…YGLS), 205-225 (GQLV…FWPC), and 227-247 (FPLG…ALFT). The tract at residues 274 to 299 (VAAVNGHTNSFPSLENSVKPRKQRKD) is disordered. Residues 279-289 (GHTNSFPSLEN) show a composition bias toward polar residues.

This sequence belongs to the ELO family. ELOVL5 subfamily. Interacts with TECR.

The protein resides in the endoplasmic reticulum membrane. The protein localises to the cell projection. Its subcellular location is the dendrite. It catalyses the reaction a very-long-chain acyl-CoA + malonyl-CoA + H(+) = a very-long-chain 3-oxoacyl-CoA + CO2 + CoA. The catalysed reaction is (6Z,9Z,12Z)-octadecatrienoyl-CoA + malonyl-CoA + H(+) = (8Z,11Z,14Z)-3-oxoeicosatrienoyl-CoA + CO2 + CoA. It carries out the reaction (9Z,12Z,15Z)-octadecatrienoyl-CoA + malonyl-CoA + H(+) = (11Z,14Z,17Z)-3-oxoeicosatrienoyl-CoA + CO2 + CoA. The enzyme catalyses (9Z)-hexadecenoyl-CoA + malonyl-CoA + H(+) = 3-oxo-(11Z)-octadecenoyl-CoA + CO2 + CoA. It catalyses the reaction (9Z)-octadecenoyl-CoA + malonyl-CoA + H(+) = 3-oxo-(11Z)-eicosenoyl-CoA + CO2 + CoA. The catalysed reaction is (11Z)-octadecenoyl-CoA + malonyl-CoA + H(+) = 3-oxo-(13Z)-eicosenoyl-CoA + CO2 + CoA. It carries out the reaction (9Z,12Z)-octadecadienoyl-CoA + malonyl-CoA + H(+) = (11Z,14Z)-3-oxoicosa-11,14-dienoyl-CoA + CO2 + CoA. The enzyme catalyses (6Z,9Z,12Z,15Z)-octadecatetraenoyl-CoA + malonyl-CoA + H(+) = (8Z,11Z,14Z,17Z)-3-oxoicosatetraenoyl-CoA + CO2 + CoA. It catalyses the reaction (5Z,8Z,11Z,14Z)-eicosatetraenoyl-CoA + malonyl-CoA + H(+) = (7Z,10Z,13Z,16Z)-3-oxodocosatetraenoyl-CoA + CO2 + CoA. The catalysed reaction is (5Z,8Z,11Z,14Z,17Z)-eicosapentaenoyl-CoA + malonyl-CoA + H(+) = 3-oxo-(7Z,10Z,13Z,16Z,19Z)-docosapentaenoyl-CoA + CO2 + CoA. It participates in lipid metabolism; polyunsaturated fatty acid biosynthesis. Catalyzes the first and rate-limiting reaction of the four reactions that constitute the long-chain fatty acids elongation cycle. This endoplasmic reticulum-bound enzymatic process allows the addition of 2 carbons to the chain of long- and very long-chain fatty acids (VLCFAs) per cycle. Condensing enzyme that acts specifically toward polyunsaturated acyl-CoA with the higher activity toward C18:3(n-6) acyl-CoA. May participate in the production of monounsaturated and of polyunsaturated VLCFAs of different chain lengths that are involved in multiple biological processes as precursors of membrane lipids and lipid mediators. In conditions where the essential linoleic and alpha linoleic fatty acids are lacking it is also involved in the synthesis of Mead acid from oleic acid. The sequence is that of Very long chain fatty acid elongase 5 from Mus musculus (Mouse).